The sequence spans 156 residues: C-type lectin lectoxin-Lei1 (156 aa).

The signal sequence occupies residues 1–23; sequence MRRFLFLSLGVLVVAFSLNGIGA. 3 disulfide bridges follow: C27–C38, C55–C154, and C129–C146. The region spanning 34-155 is the C-type lectin domain; sequence FDRFCYKVIK…CESRNIFICK (122 aa). Residues N60 and N99 are each glycosylated (N-linked (GlcNAc...) asparagine). The Sugar-binding signature appears at 119–121; sequence KRN. N142 serves as a coordination point for Ca(2+).

This sequence belongs to the true venom lectin family. In terms of tissue distribution, expressed by the venom gland.

The protein resides in the secreted. Its function is as follows. Lectin which recognizes specific carbohydrate structures and agglutinates a variety of animal cells by binding to cell-surface glycoproteins and glycolipids. May be a calcium-dependent lectin. The polypeptide is C-type lectin lectoxin-Lei1 (Leioheterodon madagascariensis (Malagasy giant hognose snake)).